A 685-amino-acid polypeptide reads, in one-letter code: Diphthine--ammonia ligase (685 aa).

This sequence in the C-terminal section; belongs to the RutC family. In the N-terminal section; belongs to the Diphthine--ammonia ligase family. In terms of assembly, interacts with elongation factor 2 (eEF-2; EFT1 or EFT2).

It localises to the cytoplasm. The catalysed reaction is diphthine-[translation elongation factor 2] + NH4(+) + ATP = diphthamide-[translation elongation factor 2] + AMP + diphosphate + H(+). Its pathway is protein modification; peptidyl-diphthamide biosynthesis. In terms of biological role, amidase that catalyzes the last step of diphthamide biosynthesis using ammonium and ATP. Diphthamide biosynthesis consists in the conversion of an L-histidine residue in the translation elongation factor eEF-2 (EFT1 or EFT2) to diphthamide. The protein is Diphthine--ammonia ligase (DPH6) of Saccharomyces cerevisiae (strain ATCC 204508 / S288c) (Baker's yeast).